Here is a 631-residue protein sequence, read N- to C-terminus: Probable potassium transport system protein Kup 1 (631 aa).

Transmembrane regions (helical) follow at residues 16–36 (LGLS…SPLY), 58–78 (VLSL…LVFV), 109–129 (VLVF…TLTP), 145–165 (PLFH…LFLI), 173–193 (VGAL…LLGI), 219–239 (GWSG…GEAL), 255–275 (WFCC…ALLL), 288–308 (LAPP…TIIA), 345–365 (IYIP…VAGF), 370–390 (GLAA…ALLV), 402–422 (PLAV…FFGA), and 427–447 (VGAG…VMIT).

Belongs to the HAK/KUP transporter (TC 2.A.72) family.

It localises to the cell inner membrane. The catalysed reaction is K(+)(in) + H(+)(in) = K(+)(out) + H(+)(out). Its function is as follows. Transport of potassium into the cell. Likely operates as a K(+):H(+) symporter. In Geobacter sulfurreducens (strain ATCC 51573 / DSM 12127 / PCA), this protein is Probable potassium transport system protein Kup 1.